The chain runs to 159 residues: Ribosome maturation factor RimP (159 aa).

It belongs to the RimP family.

The protein resides in the cytoplasm. Functionally, required for maturation of 30S ribosomal subunits. The chain is Ribosome maturation factor RimP from Halothermothrix orenii (strain H 168 / OCM 544 / DSM 9562).